A 206-amino-acid polypeptide reads, in one-letter code: Protein-methionine-sulfoxide reductase heme-binding subunit MsrQ (206 aa).

Transmembrane regions (helical) follow at residues 14–34, 45–65, 82–102, 118–138, 149–169, and 179–199; these read IKPL…WLGA, FLTR…LAIT, MCGL…VWWD, PFIT…ATST, WQTL…HFWW, and QPLL…AAWW.

This sequence belongs to the MsrQ family. As to quaternary structure, heterodimer of a catalytic subunit (MsrP) and a heme-binding subunit (MsrQ). Requires FMN as cofactor. Heme b serves as cofactor.

Its subcellular location is the cell inner membrane. Part of the MsrPQ system that repairs oxidized periplasmic proteins containing methionine sulfoxide residues (Met-O), using respiratory chain electrons. Thus protects these proteins from oxidative-stress damage caused by reactive species of oxygen and chlorine generated by the host defense mechanisms. MsrPQ is essential for the maintenance of envelope integrity under bleach stress, rescuing a wide series of structurally unrelated periplasmic proteins from methionine oxidation. MsrQ provides electrons for reduction to the reductase catalytic subunit MsrP, using the quinone pool of the respiratory chain. The sequence is that of Protein-methionine-sulfoxide reductase heme-binding subunit MsrQ from Bordetella pertussis (strain Tohama I / ATCC BAA-589 / NCTC 13251).